A 425-amino-acid polypeptide reads, in one-letter code: Na(+)/H(+) antiporter NhaA 1 (425 aa).

11 helical membrane passes run 20-40, 65-85, 102-122, 131-151, 160-180, 183-203, 218-238, 272-292, 303-323, 342-362, and 373-393; these read AGGV…NSPL, PHLW…GLEI, LPFI…LAVT, GWAI…ALLG, LFLT…IALA, ASIK…MMAM, FVLL…AGVL, FLIV…GFSL, IAAG…WAAV, LSVL…LAFA, and LGVI…LRFA.

This sequence belongs to the NhaA Na(+)/H(+) (TC 2.A.33) antiporter family.

It localises to the cell inner membrane. It carries out the reaction Na(+)(in) + 2 H(+)(out) = Na(+)(out) + 2 H(+)(in). Functionally, na(+)/H(+) antiporter that extrudes sodium in exchange for external protons. The sequence is that of Na(+)/H(+) antiporter NhaA 1 from Novosphingobium aromaticivorans (strain ATCC 700278 / DSM 12444 / CCUG 56034 / CIP 105152 / NBRC 16084 / F199).